Here is a 165-residue protein sequence, read N- to C-terminus: uncharacterized protein (165 aa).

In terms of domain architecture, N-acetyltransferase spans 8–159 (LLVNYKTLEE…QGVQEQTTKP (152 aa)).

This is an uncharacterized protein from Shouchella clausii (strain KSM-K16) (Alkalihalobacillus clausii).